Reading from the N-terminus, the 566-residue chain is Poly(A) polymerase pla1 (566 aa).

Residues 86–88, 99–101, Asp153, Lys214, Tyr223, and 232–233 each bind ATP; these read YGS, DID, and GV. Mg(2+)-binding residues include Asp99, Asp101, and Asp153. Disordered regions lie at residues 437 to 463 and 530 to 566; these read HEKL…SENG and DEVF…VSTA.

It belongs to the poly(A) polymerase family. It depends on Mg(2+) as a cofactor. Mn(2+) is required as a cofactor.

It is found in the nucleus. It carries out the reaction RNA(n) + ATP = RNA(n)-3'-adenine ribonucleotide + diphosphate. Its function is as follows. Polymerase that creates the 3'-poly(A) tail of mRNA's. May acquire specificity through interaction with a cleavage and polyadenylation factor (CF I). The sequence is that of Poly(A) polymerase pla1 (pla1) from Schizosaccharomyces pombe (strain 972 / ATCC 24843) (Fission yeast).